The following is a 293-amino-acid chain: MALVSADSRIAELLTELHQLIKQTQEERSRSEHNLVNIQKTHERMQTENKISPYYRTKLRGLYTTAKTDAEAECNILRKALDKIAEIKSLLEERRIAAKIAGLYNDSEPPRKTMRRGVLMTLLQQSAMTLPLWIGKPGDKPPPLCGAIPASGDYVAKPGDKVAARVKAVEGDEQWILAEVVSYSHATNKYEVDDIDEEGKERHTLSRRRIIPLPQWKANPETDPEALFQKEQLVLALYPQTTCFYRALIHTPPQRPQDDYSVLFEDTSYADGYSPPLNVAQRYVVACKEPKKK.

Residues 3–86 are a coiled coil; the sequence is LVSADSRIAE…LRKALDKIAE (84 aa). One can recognise an SGF29 C-terminal domain in the interval 152-293; it reads GDYVAKPGDK…VVACKEPKKK (142 aa). 2 histone H3K4me3 N-terminus binding regions span residues 194-196 and 240-243; these read DID and QTTC. The tract at residues 264–266 is histone H3K4me3 binding; the sequence is FED. Residue K288 is modified to N6-acetyllysine.

Belongs to the SGF29 family. Interacts with dimethylated and trimethylated 'Lys-4' of histone H3 (H3K4me2 and H3K4me3), with a preference for the trimethylated form (H3K4me3). Component of some SAGA-type complexes. Component of the ADA2A-containing complex (ATAC), composed of KAT14, KAT2A, TADA2L, TADA3L, ZZ3, MBIP, WDR5, YEATS2, CCDC101 and DR1. Interacts with (methylated) CGAS. Interacts with TADA3L, GCN5L2, SUPT3H and MYC.

It localises to the nucleus. Its function is as follows. Chromatin reader component of some histone acetyltransferase (HAT) SAGA-type complexes like the TFTC-HAT, ATAC or STAGA complexes. SGF29 specifically recognizes and binds methylated 'Lys-4' of histone H3 (H3K4me), with a preference for trimethylated form (H3K4me3). In the SAGA-type complexes, SGF29 is required to recruit complexes to H3K4me. Involved in the response to endoplasmic reticulum (ER) stress by recruiting the SAGA complex to H3K4me, thereby promoting histone H3 acetylation and cell survival. Also binds non-histone proteins that are methylated on Lys residues: specifically recognizes and binds CGAS monomethylated on 'Lys-491'. The protein is SAGA-associated factor 29 of Mus musculus (Mouse).